The sequence spans 279 residues: Thymidylate synthase (279 aa).

133–134 (RR) lines the dUMP pocket. Cys-154 (nucleophile) is an active-site residue. DUMP contacts are provided by residues 178–181 (RSND), Asn-189, and 219–221 (HIY). Asp-181 is a (6R)-5,10-methylene-5,6,7,8-tetrahydrofolate binding site. Ala-278 contributes to the (6R)-5,10-methylene-5,6,7,8-tetrahydrofolate binding site.

This sequence belongs to the thymidylate synthase family. Bacterial-type ThyA subfamily. In terms of assembly, homodimer.

The protein localises to the cytoplasm. The catalysed reaction is dUMP + (6R)-5,10-methylene-5,6,7,8-tetrahydrofolate = 7,8-dihydrofolate + dTMP. It participates in pyrimidine metabolism; dTTP biosynthesis. Catalyzes the reductive methylation of 2'-deoxyuridine-5'-monophosphate (dUMP) to 2'-deoxythymidine-5'-monophosphate (dTMP) while utilizing 5,10-methylenetetrahydrofolate (mTHF) as the methyl donor and reductant in the reaction, yielding dihydrofolate (DHF) as a by-product. This enzymatic reaction provides an intracellular de novo source of dTMP, an essential precursor for DNA biosynthesis. In Streptococcus pneumoniae (strain 70585), this protein is Thymidylate synthase.